Here is a 503-residue protein sequence, read N- to C-terminus: ATP synthase subunit alpha (503 aa).

169–176 lines the ATP pocket; sequence GDRKTGKT.

It belongs to the ATPase alpha/beta chains family. As to quaternary structure, F-type ATPases have 2 components, CF(1) - the catalytic core - and CF(0) - the membrane proton channel. CF(1) has five subunits: alpha(3), beta(3), gamma(1), delta(1), epsilon(1). CF(0) has three main subunits: a(1), b(2) and c(9-12). The alpha and beta chains form an alternating ring which encloses part of the gamma chain. CF(1) is attached to CF(0) by a central stalk formed by the gamma and epsilon chains, while a peripheral stalk is formed by the delta and b chains.

It is found in the cell membrane. The catalysed reaction is ATP + H2O + 4 H(+)(in) = ADP + phosphate + 5 H(+)(out). In terms of biological role, produces ATP from ADP in the presence of a proton gradient across the membrane. The alpha chain is a regulatory subunit. The polypeptide is ATP synthase subunit alpha (Lactobacillus johnsonii (strain CNCM I-12250 / La1 / NCC 533)).